Reading from the N-terminus, the 840-residue chain is MSSAVLVTLLPDPSSSFREDAPRPPVPGEEGETPPCQPSVGKVQSTKPMPVSSNARRNEDGLGEPEGRASPDSPLTRWTKSLHSLLGDQDGAYLFRTFLEREKCVDTLDFWFACNGFRQMNLKDTKTLRVAKAIYKRYIENNSVVSKQLKPATKTYIRDGIKKQQIGSVMFDQAQTEIQAVMEENAYQVFLTSDIYLEYVRSGGENTAYMSNGGLGSLKVLCGYLPTLNEEEEWTCADLKCKLSPTVVGLSSKTLRATASVRSTETAENGFRSFKRSDPVNPYHVGSGYVFAPATSANDSELSSDALTDDSMSMTDSSVDGVPPYRMGSKKQLQREMHRSVKANGQVSLPHFPRTHRLPKEMTPVEPAAFAAELISRLEKLKLELESRHSLEERLQQIREDEEKEGSEQALSSRDGAPVQHPLALLPSGSYEEDPQTILDDHLSRVLKTPGCQSPGVGRYSPRSRSPDHHHQHHHHQQCHTLLPTGGKLPPVAACPLLGGKSFLTKQTTKHVHHHYIHHHAVPKTKEEIEAEATQRVRCLCPGGTDYYCYSKCKSHPKAPEPLPGEQFCGSRGGTLPKRNAKGTEPGLALSARDGGMSSAAGAPQLPGEEGDRSQDVWQWMLESERQSKSKPHSAQSIRKSYPLESACAAPGERVSRHHLLGASGHSRSVARAHPFTQDPAMPPLTPPNTLAQLEEACRRLAEVSKPQKQRCCVASQQRDRNHSAAGQAGASPFANPSLAPEDHKEPKKLASVHALQASELVVTYFFCGEEIPYRRMLKAQSLTLGHFKEQLSKKGNYRYYFKKASDEFACGAVFEEIWDDETVLPMYEGRILGKVERID.

The interval 1–75 is disordered; that stretch reads MSSAVLVTLL…EGRASPDSPL (75 aa). Positions 21 to 30 match the Tankyrase-binding motif motif; that stretch reads APRPPVPGEE. Over residues 42-55 the composition is skewed to polar residues; sequence KVQSTKPMPVSSNA. A compositionally biased stretch (basic and acidic residues) spans 56–69; sequence RRNEDGLGEPEGRA. The RGS domain maps to 81-200; that stretch reads SLHSLLGDQD…LTSDIYLEYV (120 aa). Disordered stretches follow at residues 300 to 363, 398 to 435, 447 to 485, 572 to 614, and 715 to 745; these read SELS…KEMT, IREDEEKEGSEQALSSRDGAPVQHPLALLPSGSYEEDP, LKTPGCQSPGVGRYSPRSRSPDHHHQHHHHQQCHTLLPT, RGGT…GDRS, and ASQQRDRNHSAAGQAGASPFANPSLAPEDHK. The segment covering 303–318 has biased composition (low complexity); the sequence is SSDALTDDSMSMTDSS. The interaction with GSK3B stretch occupies residues 327–413; that stretch reads MGSKKQLQRE…KEGSEQALSS (87 aa). Residues 413 to 478 are interaction with beta-catenin; the sequence is SRDGAPVQHP…HHHQHHHHQQ (66 aa). Residues 468–478 are compositionally biased toward basic residues; the sequence is DHHHQHHHHQQ. The region spanning 758–840 is the DIX domain; sequence ASELVVTYFF…RILGKVERID (83 aa).

Interacts with glycogen synthase kinase-3 beta (GSK3B) and beta-catenin. The interaction between axin and beta-catenin occurs via the armadillo repeats contained in beta-catenin. Interacts with SMAD7 and RNF111. Interacts with ANKRD6. Interacts with SIAH1. Interacts with SIAH2. Post-translationally, ADP-ribosylated by tankyrase TNKS and TNKS2. Poly-ADP-ribosylated protein is recognized by RNF146, followed by ubiquitination and subsequent activation of the Wnt signaling pathway. Ubiquitinated by RNF146 when poly-ADP-ribosylated, leading to its degradation and subsequent activation of the Wnt signaling pathway. Deubiquitinated by USP34, deubiquitinated downstream of beta-catenin stabilization step: deubiquitination is important Wnt signaling to positively regulate beta-catenin (CTNBB1)-mediated transcription. In terms of processing, probably phosphorylated by GSK3B and dephosphorylated by PP2A. As to expression, expressed in Tcf7-positive innate-like T-cells (at protein level).

Its subcellular location is the cytoplasm. Its function is as follows. Inhibitor of the Wnt signaling pathway. Down-regulates beta-catenin. Probably facilitate the phosphorylation of beta-catenin and APC by GSK3B. This chain is Axin-2, found in Mus musculus (Mouse).